A 175-amino-acid polypeptide reads, in one-letter code: Protein-export protein SecB (175 aa).

Residues 153-163 (QQQPDAANGND) are compositionally biased toward polar residues. Positions 153-175 (QQQPDAANGNDSGIILPPGATRQ) are disordered.

The protein belongs to the SecB family. As to quaternary structure, homotetramer, a dimer of dimers. One homotetramer interacts with 1 SecA dimer.

The protein resides in the cytoplasm. Functionally, one of the proteins required for the normal export of preproteins out of the cell cytoplasm. It is a molecular chaperone that binds to a subset of precursor proteins, maintaining them in a translocation-competent state. It also specifically binds to its receptor SecA. In Bordetella bronchiseptica (strain ATCC BAA-588 / NCTC 13252 / RB50) (Alcaligenes bronchisepticus), this protein is Protein-export protein SecB.